The following is a 489-amino-acid chain: Acetylcholine receptor subunit beta (489 aa).

The signal sequence occupies residues 1-20; that stretch reads NSGALLWPLIWGLLLIGTQA. At 21–235 the chain is on the extracellular side; the sequence is LDKEAQLRDK…ITFYLVIQRK (215 aa). N-linked (GlcNAc...) asparagine glycosylation is found at Asn135 and Asn161. Cys148 and Cys162 are disulfide-bonded. The next 3 membrane-spanning stretches (helical) occupy residues 236-260, 268-286, and 302-323; these read PLFY…VFYL, MTLS…LLLA, and YLIF…VLNL. The Cytoplasmic segment spans residues 324–457; it reads HHRSPNTHHM…WQYVAMVVDR (134 aa). A helical membrane pass occupies residues 458–476; that stretch reads LFLWTFIAFTSLGTLSIFL.

This sequence belongs to the ligand-gated ion channel (TC 1.A.9) family. Acetylcholine receptor (TC 1.A.9.1) subfamily. Beta-1/CHRNB1 sub-subfamily. In terms of assembly, pentamer of two alpha chains, and one each of the beta, delta, and gamma (in immature muscle) or epsilon (in mature muscle) chains.

The protein resides in the postsynaptic cell membrane. Its subcellular location is the cell membrane. The catalysed reaction is K(+)(in) = K(+)(out). The enzyme catalyses Na(+)(in) = Na(+)(out). Its function is as follows. After binding acetylcholine, the AChR responds by an extensive change in conformation that affects all subunits and leads to opening of an ion-conducting channel across the plasma membrane. The protein is Acetylcholine receptor subunit beta (chrnb1) of Xenopus laevis (African clawed frog).